The primary structure comprises 490 residues: Probable cytosol aminopeptidase (490 aa).

Mn(2+)-binding residues include Lys257 and Asp262. Residue Lys269 is part of the active site. Mn(2+)-binding residues include Asp281, Asp341, and Glu343. Arg345 is an active-site residue.

Belongs to the peptidase M17 family. The cofactor is Mn(2+).

Its subcellular location is the cytoplasm. It carries out the reaction Release of an N-terminal amino acid, Xaa-|-Yaa-, in which Xaa is preferably Leu, but may be other amino acids including Pro although not Arg or Lys, and Yaa may be Pro. Amino acid amides and methyl esters are also readily hydrolyzed, but rates on arylamides are exceedingly low.. It catalyses the reaction Release of an N-terminal amino acid, preferentially leucine, but not glutamic or aspartic acids.. Presumably involved in the processing and regular turnover of intracellular proteins. Catalyzes the removal of unsubstituted N-terminal amino acids from various peptides. This Prochlorococcus marinus (strain AS9601) protein is Probable cytosol aminopeptidase.